Reading from the N-terminus, the 415-residue chain is Histidine--tRNA ligase (415 aa).

This sequence belongs to the class-II aminoacyl-tRNA synthetase family. As to quaternary structure, homodimer.

The protein resides in the cytoplasm. It catalyses the reaction tRNA(His) + L-histidine + ATP = L-histidyl-tRNA(His) + AMP + diphosphate + H(+). The sequence is that of Histidine--tRNA ligase from Rickettsia canadensis (strain McKiel).